The following is a 284-amino-acid chain: NAD kinase (284 aa).

D70 functions as the Proton acceptor in the catalytic mechanism. NAD(+)-binding positions include 70–71 (DG), 139–140 (NE), K167, D169, L177, 180–185 (TAYNLS), and Q236.

It belongs to the NAD kinase family. Requires a divalent metal cation as cofactor.

The protein localises to the cytoplasm. The catalysed reaction is NAD(+) + ATP = ADP + NADP(+) + H(+). Functionally, involved in the regulation of the intracellular balance of NAD and NADP, and is a key enzyme in the biosynthesis of NADP. Catalyzes specifically the phosphorylation on 2'-hydroxyl of the adenosine moiety of NAD to yield NADP. This is NAD kinase from Helicobacter pylori (strain ATCC 700392 / 26695) (Campylobacter pylori).